We begin with the raw amino-acid sequence, 930 residues long: A disintegrin and metalloproteinase with thrombospondin motifs 5 (930 aa).

A signal peptide spans 1 to 21; that stretch reads MRLEWAPLLLLLLLLSASCLS. The propeptide occupies 22–261; the sequence is LAADSPAAAP…PQTWWRRRRR (240 aa). Residues 31-53 are compositionally biased toward low complexity; sequence PAQDKTRQPQAAAAAAEPDQPQG. Disordered stretches follow at residues 31-68 and 207-231; these read PAQD…LAGQ and ASCE…SRRR. The Cysteine switch motif lies at 207-214; the sequence is ASCETPAS. Cysteine 209 contacts Zn(2+). The span at 211 to 225 shows a compositional bias: polar residues; sequence TPASPSGPQESPSVH. Residues 267 to 476 form the Peptidase M12B domain; it reads RQVELLLVAD…GHGNCLLDLP (210 aa). 8 disulfide bridges follow: cysteine 342-cysteine 394, cysteine 371-cysteine 376, cysteine 388-cysteine 471, cysteine 426-cysteine 455, cysteine 497-cysteine 519, cysteine 508-cysteine 529, cysteine 514-cysteine 548, and cysteine 542-cysteine 553. Histidine 410 contacts Zn(2+). The active site involves glutamate 411. Histidine 414 and histidine 420 together coordinate Zn(2+). One can recognise a Disintegrin domain in the interval 485-566; that stretch reads ELPGQTYDAT…TKKKYYSTSS (82 aa). Asparagine 498 is a glycosylation site (N-linked (GlcNAc...) asparagine). The region spanning 567–622 is the TSP type-1 1 domain; it reads HGNWGSWGPWGQCSRSCGGGVQFAYRHCNNPAPRNSGRYCTGKRAIYRSCSVTPCP. Tryptophan 570 and tryptophan 573 each carry a C-linked (Man) tryptophan glycan. Disulfide bonds link cysteine 579–cysteine 616, cysteine 583–cysteine 621, and cysteine 594–cysteine 606. The O-linked (Fuc...) serine glycan is linked to serine 582. Asparagine 728, asparagine 802, and asparagine 807 each carry an N-linked (GlcNAc...) asparagine glycan. Residues 732-874 are spacer; it reads TKIIGTFNKK…HGSNKVGPHS (143 aa). Residues 875-929 form the TSP type-1 2 domain; it reads TQLQWVTGPWLACSRTCDTGWHTRTVQCQDGNRKLAKGCLLSQRPSAFKQCLLKK.

Zn(2+) is required as a cofactor. In terms of processing, the precursor is cleaved by furin and PCSK7 outside of the cell. Glycosylated. Can be O-fucosylated by POFUT2 on a serine or a threonine residue found within the consensus sequence C1-X(2)-(S/T)-C2-G of the TSP type-1 repeat domains where C1 and C2 are the first and second cysteine residue of the repeat, respectively. Fucosylated repeats can then be further glycosylated by the addition of a beta-1,3-glucose residue by the glucosyltransferase, B3GALTL. Fucosylation mediates the efficient secretion of ADAMTS family members. Can also be C-glycosylated with one or two mannose molecules on tryptophan residues within the consensus sequence W-X-X-W of the TPRs, and N-glycosylated. These other glycosylations can also facilitate secretion. In terms of tissue distribution, expressed in skeletal muscle.

Its subcellular location is the secreted. It is found in the extracellular space. The protein resides in the extracellular matrix. In terms of biological role, metalloproteinase that plays an important role in connective tissue organization, development, inflammation and cell migration. Extracellular matrix (ECM) degrading enzyme that shows proteolytic activity toward the hyalectan group of chondroitin sulfate proteoglycans (CSPGs) including ACAN, VCAN, BCAN and NCAN. Cleavage within the hyalectans occurs at Glu-Xaa recognition motifs. Plays a role in embryonic development, including limb and cardiac morphogenesis, and skeletal muscle development through its VCAN remodeling properties. Cleaves VCAN in the pericellular matrix surrounding myoblasts, facilitating myoblast contact and fusion which is required for skeletal muscle development and regeneration. Participates in the development of brown adipose tissue and browning of white adipose tissue. Plays an important role for T-lymphocyte migration from draining lymph nodes following viral infection. This Mus musculus (Mouse) protein is A disintegrin and metalloproteinase with thrombospondin motifs 5 (Adamts5).